Here is a 122-residue protein sequence, read N- to C-terminus: MKTLTRMQLGALGEQLAVEHLSGQGLQILTRNWRCRYGELDVIACEAATRTVVFVEVKTRTGDGYGGLAQAVTEGKVRRLRRLAGLWLAGQDRGWAAVRLDVIGVRIGRSANPEITHLMGVG.

Belongs to the UPF0102 family.

The protein is UPF0102 protein MUL_2060 of Mycobacterium ulcerans (strain Agy99).